Consider the following 435-residue polypeptide: Keratin, type I cytoskeletal 18 (435 aa).

The segment covering Met1–Ser28 has biased composition (low complexity). A disordered region spans residues Met1–Pro36. Residues Ser2 to Asn88 are head. A coil 1A region spans residues Glu89 to Ala123. The 311-residue stretch at Glu89–Leu399 folds into the IF rod domain. The segment at Leu124–Ile140 is linker 1. Positions Ile141–Leu232 are coil 1B. Residues Arg233–Ile256 are linker 12. Residues Met257–Gly394 are coil 2. The tract at residues Gly395–Phe435 is tail.

Belongs to the intermediate filament family. In terms of assembly, heterotetramer of two type I and two type II keratins. Keratin-18 associates with keratin-8. In terms of processing, phosphorylated. Post-translationally, proteolytically cleaved by caspases during epithelial cell apoptosis. In terms of tissue distribution, abundantly expressed in an even distribution throughout the optic nerve, localizing specifically to the astrocyte domains. Moderately expressed in spinal cord, brain, liver and oocytes.

Functionally, when phosphorylated, plays a role in filament reorganization. The sequence is that of Keratin, type I cytoskeletal 18 (krt18) from Carassius auratus (Goldfish).